The sequence spans 399 residues: uncharacterized protein (399 aa).

This is an uncharacterized protein from Aquifex aeolicus (strain VF5).